The sequence spans 90 residues: Protein LURE 1.2 (90 aa).

Residues 1–19 (MKLPIIFLTLLIFVSSCTS) form the signal peptide. Asn-23 is a glycosylation site (N-linked (GlcNAc...) asparagine). Disulfide bonds link Cys-58-Cys-75, Cys-61-Cys-82, and Cys-65-Cys-84. Positions 67–87 (RRGKYIRTCSFERKLCRCSIS) are PRK6 binding.

The protein belongs to the DEFL family. Interacts with MDIS1, MIK1, MIK2 and TDR/PXY, but not with MDIS2. Binds to PRK6 LRRs. Expressed in the pistil. Detected exclusively in the synergid cells.

The protein localises to the secreted. Functionally, pollen tube attractants guiding pollen tubes to the ovular micropyle. Attracts specifically pollen tubes from A.thaliana, but not those from A.lyrata. Triggers endocytosis of MDIS1 in the pollen tube tip. In Arabidopsis thaliana (Mouse-ear cress), this protein is Protein LURE 1.2.